Here is a 618-residue protein sequence, read N- to C-terminus: Probable protein disulfide-isomerase A4 (618 aa).

Residues 1–21 (MMFDRRFFALVVLLCVSAVRS) form the signal peptide. Thioredoxin domains lie at 22–139 (TEDA…SRVD), 138–254 (VDPN…DQSK), and 480–609 (SSGK…KHGV). Cystine bridges form between Cys65–Cys68, Cys176–Cys179, and Cys529–Cys532. A Prevents secretion from ER motif is present at residues 615–618 (KDEL).

This sequence belongs to the protein disulfide isomerase family.

It is found in the endoplasmic reticulum lumen. It catalyses the reaction Catalyzes the rearrangement of -S-S- bonds in proteins.. This chain is Probable protein disulfide-isomerase A4, found in Caenorhabditis elegans.